Consider the following 84-residue polypeptide: Large ribosomal subunit protein eL34 (84 aa).

The protein belongs to the eukaryotic ribosomal protein eL34 family.

The polypeptide is Large ribosomal subunit protein eL34 (Pyrobaculum calidifontis (strain DSM 21063 / JCM 11548 / VA1)).